A 209-amino-acid polypeptide reads, in one-letter code: Chloramphenicol acetyltransferase (209 aa).

The active site involves histidine 78.

Belongs to the transferase hexapeptide repeat family.

It catalyses the reaction chloramphenicol + acetyl-CoA = chloramphenicol 3-acetate + CoA. Functionally, this enzyme is an effector of chloramphenicol resistance in bacteria. This Agrobacterium fabrum (strain C58 / ATCC 33970) (Agrobacterium tumefaciens (strain C58)) protein is Chloramphenicol acetyltransferase (cat).